The sequence spans 110 residues: Cell cycle protein GpsB (110 aa).

A coiled-coil region spans residues Lys37–Ala63. Positions Lys59–His79 are disordered. The span at Ala60–Ser75 shows a compositional bias: low complexity.

The protein belongs to the GpsB family. Forms polymers through the coiled coil domains. Interacts with PBP1, MreC and EzrA.

It localises to the cytoplasm. In terms of biological role, divisome component that associates with the complex late in its assembly, after the Z-ring is formed, and is dependent on DivIC and PBP2B for its recruitment to the divisome. Together with EzrA, is a key component of the system that regulates PBP1 localization during cell cycle progression. Its main role could be the removal of PBP1 from the cell pole after pole maturation is completed. Also contributes to the recruitment of PBP1 to the division complex. Not essential for septum formation. This Streptococcus thermophilus (strain CNRZ 1066) protein is Cell cycle protein GpsB.